A 360-amino-acid polypeptide reads, in one-letter code: Uroporphyrinogen decarboxylase (360 aa).

Substrate-binding positions include 27–31, Phe-46, Asp-77, Tyr-154, Thr-209, and His-327; that span reads RQSGR.

It belongs to the uroporphyrinogen decarboxylase family. As to quaternary structure, homodimer.

It is found in the cytoplasm. It catalyses the reaction uroporphyrinogen III + 4 H(+) = coproporphyrinogen III + 4 CO2. It functions in the pathway porphyrin-containing compound metabolism; protoporphyrin-IX biosynthesis; coproporphyrinogen-III from 5-aminolevulinate: step 4/4. Functionally, catalyzes the decarboxylation of four acetate groups of uroporphyrinogen-III to yield coproporphyrinogen-III. This is Uroporphyrinogen decarboxylase from Wigglesworthia glossinidia brevipalpis.